Here is a 239-residue protein sequence, read N- to C-terminus: Cysteine-rich venom protein (239 aa).

The N-terminal stretch at 1–19 is a signal peptide; the sequence is MIAFLVLPILAAVLQQSSG. Residues 39–166 enclose the SCP domain; that stretch reads DLHNSLRRSV…EYKYFYVCQY (128 aa). Disulfide bonds link C75–C153, C92–C167, C148–C164, C186–C193, C189–C198, C202–C234, C211–C228, and C219–C232. In terms of domain architecture, ShKT spans 202 to 234; the sequence is CTHEDKFTNCKDLVKQGCNNNYLKTNCPASCSC.

This sequence belongs to the CRISP family. In terms of tissue distribution, expressed by the venom gland.

It localises to the secreted. Blocks contraction of smooth muscle elicited by high potassium-induced depolarization, but does not block caffeine-stimulated contraction. May target voltage-gated calcium channels in smooth muscle. The polypeptide is Cysteine-rich venom protein (Vipera berus (Common European adder)).